We begin with the raw amino-acid sequence, 387 residues long: Small ribosomal subunit protein uS5m (387 aa).

The N-terminal 22 residues, 1–22 (MLRSFSHFLQIGSRRQPTYFRC), are a transit peptide targeting the mitochondrion. The interval 33-87 (FKNDPKKELNSNLNEKSVEESSKNETKEQFNSSSIPRESESEGKTASNTSPLSPK) is disordered. A compositionally biased stretch (basic and acidic residues) spans 48-60 (KSVEESSKNETKE). At serine 85 the chain carries Phosphoserine. Residues 225–288 (LMFVPLVRRR…GRAVKNMVYI (64 aa)) form the S5 DRBM domain.

This sequence belongs to the universal ribosomal protein uS5 family. Component of the mitochondrial small ribosomal subunit (mt-SSU). Mature yeast 74S mitochondrial ribosomes consist of a small (37S) and a large (54S) subunit. The 37S small subunit contains a 15S ribosomal RNA (15S mt-rRNA) and at least 32 different proteins. The 54S large subunit contains a 21S rRNA (21S mt-rRNA) and at least 45 different proteins. uS3m, uS4m and uS5m form the narrow entry site of the mRNA channel.

Its subcellular location is the mitochondrion. Component of the mitochondrial ribosome (mitoribosome), a dedicated translation machinery responsible for the synthesis of mitochondrial genome-encoded proteins, including at least some of the essential transmembrane subunits of the mitochondrial respiratory chain. The mitoribosomes are attached to the mitochondrial inner membrane and translation products are cotranslationally integrated into the membrane. This is Small ribosomal subunit protein uS5m (mrp5) from Schizosaccharomyces pombe (strain 972 / ATCC 24843) (Fission yeast).